Here is an 833-residue protein sequence, read N- to C-terminus: Kinesin-like protein KIFC3 (833 aa).

A disordered region spans residues 19–74; that stretch reads LWRVGRAPEPEPGMARPAPAPASPAARPFPHTGPGRLRTGRGKDTPVCGDEDSSAR. The segment covering 30–48 has biased composition (low complexity); sequence PGMARPAPAPASPAARPFP. Coiled coils occupy residues 102-362 and 395-432; these read LTLQ…ENLA and LLQE…LQLR. The Kinesin motor domain occupies 445–768; that stretch reads NIRVIARVRP…LKFAERVRSV (324 aa). Residue 528-535 participates in ATP binding; that stretch reads GQTGAGKT. The interval 786 to 833 is disordered; the sequence is EHLEWEPACQTPQPSARAHSAPSSGTSSRPGSIRRKLQPSGKSRPLPV. The span at 806 to 815 shows a compositional bias: polar residues; the sequence is APSSGTSSRP. Phosphoserine is present on residues Ser-813 and Ser-817.

It belongs to the TRAFAC class myosin-kinesin ATPase superfamily. Kinesin family.

It is found in the cell junction. It localises to the adherens junction. The protein resides in the cytoplasm. The protein localises to the cytoskeleton. Its subcellular location is the microtubule organizing center. It is found in the centrosome. It localises to the cytoplasmic vesicle membrane. Its function is as follows. Minus-end microtubule-dependent motor protein. Involved in apically targeted transport. Required for zonula adherens maintenance. This Homo sapiens (Human) protein is Kinesin-like protein KIFC3 (KIFC3).